The sequence spans 130 residues: Large ribosomal subunit protein bL20 (130 aa).

It belongs to the bacterial ribosomal protein bL20 family.

Functionally, binds directly to 23S ribosomal RNA and is necessary for the in vitro assembly process of the 50S ribosomal subunit. It is not involved in the protein synthesizing functions of that subunit. The chain is Large ribosomal subunit protein bL20 from Clavibacter sepedonicus (Clavibacter michiganensis subsp. sepedonicus).